Consider the following 278-residue polypeptide: Energy-coupling factor transporter ATP-binding protein EcfA1 (278 aa).

An ABC transporter domain is found at 5 to 240 (IEVRNLKYKY…EDLEELGLDQ (236 aa)). Residue 40-47 (GHNGSGKS) participates in ATP binding.

It belongs to the ABC transporter superfamily. Energy-coupling factor EcfA family. In terms of assembly, forms a stable energy-coupling factor (ECF) transporter complex composed of 2 membrane-embedded substrate-binding proteins (S component), 2 ATP-binding proteins (A component) and 2 transmembrane proteins (T component).

It is found in the cell membrane. Its function is as follows. ATP-binding (A) component of a common energy-coupling factor (ECF) ABC-transporter complex. Unlike classic ABC transporters this ECF transporter provides the energy necessary to transport a number of different substrates. This Streptococcus sanguinis (strain SK36) protein is Energy-coupling factor transporter ATP-binding protein EcfA1.